A 583-amino-acid chain; its full sequence is Membrane-bound O-acyltransferase gup1 (583 aa).

Residues Met-1–Ser-52 are Extracellular-facing. Residues Lys-15–Leu-42 form a disordered region. Over residues Ser-22–Ser-40 the composition is skewed to low complexity. The chain crosses the membrane as a helical span at residues Ala-53–Ala-73. The Cytoplasmic portion of the chain corresponds to Cys-74–Met-119. The chain crosses the membrane as a helical span at residues Pro-120–Phe-140. Over Thr-141 to Ser-159 the chain is Extracellular. A helical transmembrane segment spans residues Leu-160–Ile-180. Residues Asn-181–Ser-191 are Cytoplasmic-facing. Residues Ile-192–Phe-212 traverse the membrane as a helical segment. Residues Ala-213–Lys-298 are Extracellular-facing. The helical transmembrane segment at Asn-299–Asn-319 threads the bilayer. Over Asn-320–Arg-343 the chain is Cytoplasmic. Residues Phe-344–Ser-364 form a helical membrane-spanning segment. Residues Lys-365 to Ser-373 lie on the Extracellular side of the membrane. A helical transmembrane segment spans residues Ala-374–Ile-394. The Cytoplasmic segment spans residues Pro-395–Tyr-444. The next 2 membrane-spanning stretches (helical) occupy residues Val-445 to Ala-465 and Leu-466 to Leu-486. The active site involves His-468. The Cytoplasmic portion of the chain corresponds to Pro-487 to Phe-512. A helical transmembrane segment spans residues Gly-513 to Ile-533. Over Asp-534–Gly-549 the chain is Extracellular. A helical membrane pass occupies residues Ala-550–Ile-570. Residues Arg-571–Cys-583 are Cytoplasmic-facing.

The protein belongs to the membrane-bound acyltransferase family.

It is found in the cell membrane. The protein localises to the endoplasmic reticulum membrane. It localises to the mitochondrion membrane. Membrane-bound O-acyltransferase involved in the remodeling of glycosylphosphatidylinositol (GPI) anchors. Acts only on GPI-anchored proteins, but not on free GPI lipids. Also involved in lipid metabolism, having profound effects on sphingolipid-sterol-ordered domains integrity and assembly. Involved in cell integrity and apoptosis. This chain is Membrane-bound O-acyltransferase gup1 (gup1), found in Schizosaccharomyces pombe (strain 972 / ATCC 24843) (Fission yeast).